Consider the following 178-residue polypeptide: Gamma-crystallin S (178 aa).

At serine 2 the chain carries N-acetylserine. Positions 2 to 5 (SKTG) are N-terminal arm. 2 Beta/gamma crystallin 'Greek key' domains span residues 6 to 44 (TKIT…KVEG) and 45 to 87 (GTWA…RAVH). The connecting peptide stretch occupies residues 88-93 (LPSGGQ). Beta/gamma crystallin 'Greek key' domains lie at 94 to 134 (YKIQ…KVLE) and 135 to 177 (GVWI…RRIV).

This sequence belongs to the beta/gamma-crystallin family. Monomer.

In terms of biological role, crystallins are the dominant structural components of the vertebrate eye lens. The protein is Gamma-crystallin S (CRYGS) of Homo sapiens (Human).